The chain runs to 171 residues: Putative lipoprotein LppO (171 aa).

The N-terminal stretch at 1–28 (MTDPRHTVRIAVGATALGVSALGATLPA) is a signal peptide. Residue C29 is the site of N-palmitoyl cysteine attachment. A lipid anchor (S-diacylglycerol cysteine) is attached at C29.

The protein localises to the cell membrane. The protein is Putative lipoprotein LppO (lppO) of Mycobacterium tuberculosis (strain CDC 1551 / Oshkosh).